A 497-amino-acid chain; its full sequence is uncharacterized protein (497 aa).

11 helical membrane passes run 91 to 111 (WVGTSFYLGFMVFSLPLSTLL), 119 to 139 (VTSAFIVAWGILMTLTCLVHS), 149 to 169 (LLGILESVITPAFVLFIAQWY), 179 to 199 (AFLVAWNGLGGLIGGSMSYGL), 215 to 235 (ILFIITGLITIINGVFIFIHI), 283 to 303 (MYLYFFLQIAVAIPNGGLSNF), 319 to 339 (LLMNMPTSSISFAALTLFGLI), 347 to 367 (MDIALVGLAINLTSGSLIAFA), 374 to 394 (LAGYWLFGISPIPYICILSCI), 406 to 426 (FMSAVSMIGYCVGNMVGPQTF), and 439 to 459 (VSFVVCYCVAIFIIIAIYAVN).

Belongs to the major facilitator superfamily. Allantoate permease family.

It localises to the golgi apparatus. The protein localises to the membrane. This is an uncharacterized protein from Schizosaccharomyces pombe (strain 972 / ATCC 24843) (Fission yeast).